Reading from the N-terminus, the 171-residue chain is MKDRNASAEPVVKPGLSPSRFVKVFMHGEPFGRKINLALHNNYDSLSFTLKKLGNNYSMSPFELEGLVNKEEDGAIDSDFDLLYDDMDGVRYFLGDVPWEVFTTTVKKIYIVPAEQQNENDYQEEEEDNAAAAATADEDGDGAAADDGVAAAADDVDDVAGYTSNDDPSFD.

The PB1 domain occupies 19 to 114; that stretch reads SRFVKVFMHG…TVKKIYIVPA (96 aa). Residues 117–171 form a disordered region; that stretch reads QNENDYQEEEEDNAAAAATADEDGDGAAADDGVAAAADDVDDVAGYTSNDDPSFD. A compositionally biased stretch (low complexity) spans 142–153; that stretch reads GAAADDGVAAAA. Positions 162–171 are enriched in polar residues; it reads YTSNDDPSFD.

The protein belongs to the Aux/IAA family. In terms of assembly, homodimers and heterodimers.

Its subcellular location is the nucleus. Functionally, aux/IAA proteins are short-lived transcriptional factors that function as repressors of early auxin response genes at low auxin concentrations. The sequence is that of Putative auxin-responsive protein IAA29 (IAA29) from Oryza sativa subsp. japonica (Rice).